The primary structure comprises 269 residues: Tryptophan synthase alpha chain (269 aa).

Active-site proton acceptor residues include Glu49 and Asp60.

Belongs to the TrpA family. As to quaternary structure, tetramer of two alpha and two beta chains.

The enzyme catalyses (1S,2R)-1-C-(indol-3-yl)glycerol 3-phosphate + L-serine = D-glyceraldehyde 3-phosphate + L-tryptophan + H2O. It functions in the pathway amino-acid biosynthesis; L-tryptophan biosynthesis; L-tryptophan from chorismate: step 5/5. The alpha subunit is responsible for the aldol cleavage of indoleglycerol phosphate to indole and glyceraldehyde 3-phosphate. The chain is Tryptophan synthase alpha chain from Pseudomonas putida (Arthrobacter siderocapsulatus).